We begin with the raw amino-acid sequence, 200 residues long: Pyridoxal 5'-phosphate synthase subunit PdxT (200 aa).

G46–S48 contacts L-glutamine. The active-site Nucleophile is C78. L-glutamine contacts are provided by residues R107 and I138–R139. Active-site charge relay system residues include H175 and E177.

It belongs to the glutaminase PdxT/SNO family. In terms of assembly, in the presence of PdxS, forms a dodecamer of heterodimers. Only shows activity in the heterodimer.

It catalyses the reaction aldehydo-D-ribose 5-phosphate + D-glyceraldehyde 3-phosphate + L-glutamine = pyridoxal 5'-phosphate + L-glutamate + phosphate + 3 H2O + H(+). It carries out the reaction L-glutamine + H2O = L-glutamate + NH4(+). Its pathway is cofactor biosynthesis; pyridoxal 5'-phosphate biosynthesis. Its function is as follows. Catalyzes the hydrolysis of glutamine to glutamate and ammonia as part of the biosynthesis of pyridoxal 5'-phosphate. The resulting ammonia molecule is channeled to the active site of PdxS. This chain is Pyridoxal 5'-phosphate synthase subunit PdxT, found in Corynebacterium glutamicum (strain ATCC 13032 / DSM 20300 / JCM 1318 / BCRC 11384 / CCUG 27702 / LMG 3730 / NBRC 12168 / NCIMB 10025 / NRRL B-2784 / 534).